The chain runs to 237 residues: 7-cyano-7-deazaguanine synthase (237 aa).

Residue 14 to 24 participates in ATP binding; it reads FSGGQDSATCL. Residues cysteine 202, cysteine 217, cysteine 220, and cysteine 223 each contribute to the Zn(2+) site.

This sequence belongs to the QueC family. The cofactor is Zn(2+).

It carries out the reaction 7-carboxy-7-deazaguanine + NH4(+) + ATP = 7-cyano-7-deazaguanine + ADP + phosphate + H2O + H(+). Its pathway is purine metabolism; 7-cyano-7-deazaguanine biosynthesis. Functionally, catalyzes the ATP-dependent conversion of 7-carboxy-7-deazaguanine (CDG) to 7-cyano-7-deazaguanine (preQ(0)). This Rhodopseudomonas palustris (strain TIE-1) protein is 7-cyano-7-deazaguanine synthase.